A 216-amino-acid polypeptide reads, in one-letter code: MISFIKGVLIEKDPTALLIDVNGIGYEVFVPMTTFYTLGDIDSQVSLYTHFVVREDAQQLYGFKSKVDKKVFQELIKVNGIGARTAIAILSGMDSKTLLHCIENKDYALLATVPGIGKKTAERLVVEIYDKLLKMANEIYAQTSGTTTTSQDSQAQQAPTSAVLANSIFNESVDALLALGYKQKDAEKMSRSAMGDATTAAEVIRKALQGSIRSKR.

The domain I stretch occupies residues 1 to 64 (MISFIKGVLI…EDAQQLYGFK (64 aa)). The domain II stretch occupies residues 65-143 (SKVDKKVFQE…KMANEIYAQT (79 aa)). A flexible linker region spans residues 144–163 (SGTTTTSQDSQAQQAPTSAV). The tract at residues 164–216 (LANSIFNESVDALLALGYKQKDAEKMSRSAMGDATTAAEVIRKALQGSIRSKR) is domain III.

Belongs to the RuvA family. Homotetramer. Forms an RuvA(8)-RuvB(12)-Holliday junction (HJ) complex. HJ DNA is sandwiched between 2 RuvA tetramers; dsDNA enters through RuvA and exits via RuvB. An RuvB hexamer assembles on each DNA strand where it exits the tetramer. Each RuvB hexamer is contacted by two RuvA subunits (via domain III) on 2 adjacent RuvB subunits; this complex drives branch migration. In the full resolvosome a probable DNA-RuvA(4)-RuvB(12)-RuvC(2) complex forms which resolves the HJ.

The protein resides in the cytoplasm. The RuvA-RuvB-RuvC complex processes Holliday junction (HJ) DNA during genetic recombination and DNA repair, while the RuvA-RuvB complex plays an important role in the rescue of blocked DNA replication forks via replication fork reversal (RFR). RuvA specifically binds to HJ cruciform DNA, conferring on it an open structure. The RuvB hexamer acts as an ATP-dependent pump, pulling dsDNA into and through the RuvAB complex. HJ branch migration allows RuvC to scan DNA until it finds its consensus sequence, where it cleaves and resolves the cruciform DNA. The sequence is that of Holliday junction branch migration complex subunit RuvA from Francisella tularensis subsp. novicida (strain U112).